The sequence spans 326 residues: Probable cell division protein WhiA (326 aa).

Residues 275–308 constitute a DNA-binding region (H-T-H motif); the sequence is SLDELGRLADPPMTKDAIAGRIRRLLAMADKRAL.

It belongs to the WhiA family.

In terms of biological role, involved in cell division and chromosome segregation. The polypeptide is Probable cell division protein WhiA (Paenarthrobacter aurescens (strain TC1)).